The primary structure comprises 279 residues: Replication protein A 32 kDa subunit A (279 aa).

The interval 1 to 33 (MFSSSQFEPNSGFSGGGFMSSQPSQAYESSSST) is disordered. The segment covering 19–32 (MSSQPSQAYESSSS) has biased composition (low complexity). The segment at residues 73–148 (VSLVGLVCDK…QLLVFSVRPI (76 aa)) is a DNA-binding region (OB).

The protein belongs to the replication factor A protein 2 family. In terms of assembly, heterotrimer of RPA1, RPA2 and RPA3 (canonical replication protein A complex). Interacts with ROS1. Binds to ASE1/At3g02920, PDX2, At5g62350, RPA1A/At2g06510, ARF1/At1g10630, At4g18590 and At3g52630. Phosphorylated in a cell-cycle-dependent manner (from the S phase until mitosis). In response to DNA damage, recruited to DNA-repair nuclear foci, as a hypophosphorylated form. In terms of tissue distribution, strongly expressed in shoot and root meristems. Present in seedlings, roots, leaves, siliques and flowers.

It localises to the nucleus. In terms of biological role, component of the replication protein A complex (RPA) required for DNA recombination, repair and replication. The activity of RPA is mediated by single-stranded DNA binding and protein interactions. Required fo cell division in meristems. Involved in the maintenance of transcriptional epigenetic gene silencing (TGS) at specific loci (including some transposons) by regulating histone H3 acetylation, 'Lys-4' and 'Lys-9' methylation. The protein is Replication protein A 32 kDa subunit A (RPA2A) of Arabidopsis thaliana (Mouse-ear cress).